The chain runs to 546 residues: High-affinity glucose transporter ght5 (546 aa).

Residues 1–9 (MGKNLTIVM) lie on the Cytoplasmic side of the membrane. Residues 10–30 (LVFVSMAGWMFGADTGSIGGI) form a helical membrane-spanning segment. The Extracellular segment spans residues 31–58 (TNMRDFQSRFADRYNPVTDSYSYSSARQ). The helical transmembrane segment at 59-79 (GLITGMVNVGSFFGCFLSSPL) threads the bilayer. Over 80–87 (MDRIGKRT) the chain is Cytoplasmic. The helical transmembrane segment at 88–108 (SIMFWTIVYLIGIILQVTAVP) threads the bilayer. Residues 109–112 (SWVQ) lie on the Extracellular side of the membrane. A helical membrane pass occupies residues 113–133 (IMVAKIWTGLSIGALSVLAPG). Over 134-144 (FQSEVAPADLR) the chain is Cytoplasmic. Residues 145 to 165 (GTIVTTYQLAVTGGIFIAACI) traverse the membrane as a helical segment. Topologically, residues 166–179 (NMGTHKLHKTAQWR) are extracellular. The chain crosses the membrane as a helical span at residues 180 to 200 (VSMGINLLWGIITFIGISFLP). Residues 201–266 (ESPRYLISVG…IFGPDIRYRT (66 aa)) are Cytoplasmic-facing. Residues 267 to 285 (FLGLGVMSLQQLTGDNYYF) form a helical membrane-spanning segment. The Extracellular portion of the chain corresponds to 286–301 (YYGFEVFEGTGMNSPY). A helical transmembrane segment spans residues 302–322 (LSALILDAVNFGCTFGGLFVL). At 323–328 (EFFGRR) the chain is on the cytoplasmic side. Residues 329–349 (MPLIIGALWQSITFFIYAAVG) traverse the membrane as a helical segment. The Extracellular portion of the chain corresponds to 350–363 (NRALTRKNGTSNHR). Residue asparagine 357 is glycosylated (N-linked (GlcNAc...) asparagine). A helical transmembrane segment spans residues 364–384 (AGAVMIVFSCLFIFSFAQTWG). Residues 385-404 (PAAYVIVGESYPIRYRSKCA) lie on the Cytoplasmic side of the membrane. A helical membrane pass occupies residues 405 to 425 (AVATTGNWLWGFLISFFTPFI). Residues 426 to 432 (TNSIGFK) lie on the Extracellular side of the membrane. The chain crosses the membrane as a helical span at residues 433–453 (YGYIFAACNLCAACIIFLFAH). The Cytoplasmic portion of the chain corresponds to 454 to 546 (ETKGLTLEEI…SYHDQEEQFA (93 aa)). Residues 486-546 (KQQEEVREKS…SYHDQEEQFA (61 aa)) form a disordered region. Over residues 487 to 496 (QQEEVREKSR) the composition is skewed to basic and acidic residues. The span at 509–519 (VDGEEGIEDSS) shows a compositional bias: acidic residues. Positions 520–529 (NDISSTTSSD) are enriched in low complexity. Residues serine 528 and serine 537 each carry the phosphoserine modification. The span at 530-546 (GRAKPESSYHDQEEQFA) shows a compositional bias: basic and acidic residues.

The protein belongs to the major facilitator superfamily. Sugar transporter (TC 2.A.1.1) family.

The protein resides in the membrane. Functionally, high-affinity glucose transporter. This chain is High-affinity glucose transporter ght5 (ght5), found in Schizosaccharomyces pombe (strain 972 / ATCC 24843) (Fission yeast).